Reading from the N-terminus, the 336-residue chain is MAPKVGINGFGRIGRIVFRNAIEAGTVDVVAVNDPFIETHYAAYMLKYDSQHGQFKGTIETYDEGLIVNGKKIRFHTERDPANIPWGQDGAEYIVESTGVFTTQEKASAHLKGGAKKVVISAPSADAPMFVMGVNNETYKKDIQVLSNASCTTNCLAPLAKVINDNFGIIEGLMTTVHSYTATQKVVDGPSAKDWRGGRTAATNIIPSSTGAAKAVGKVIPSLNGKLTGMAMRVPTSNVSVVDLTVRTEKAVTYDQIKDAVKKASENELKGILGYTEDDIVSTDLNGDTRSSIFDAKAGIALNSNFIKLVSWYDNEWGYSRRVVDLITYISKVDAQ.

NAD(+) is bound by residues R12–I13, D34, and R79. D-glyceraldehyde 3-phosphate is bound by residues S150–T152, T181, T210–G211, and R233. The active-site Nucleophile is the C151. N315 serves as a coordination point for NAD(+).

Belongs to the glyceraldehyde-3-phosphate dehydrogenase family. As to quaternary structure, homotetramer.

Its subcellular location is the cytoplasm. It carries out the reaction D-glyceraldehyde 3-phosphate + phosphate + NAD(+) = (2R)-3-phospho-glyceroyl phosphate + NADH + H(+). It functions in the pathway carbohydrate degradation; glycolysis; pyruvate from D-glyceraldehyde 3-phosphate: step 1/5. Functionally, involved in osmoadaptation. The chain is Glyceraldehyde-3-phosphate dehydrogenase (gpdA) from Emericella nidulans (strain FGSC A4 / ATCC 38163 / CBS 112.46 / NRRL 194 / M139) (Aspergillus nidulans).